Reading from the N-terminus, the 138-residue chain is Large ribosomal subunit protein uL16 (138 aa).

Residues 1-16 (MLIPRRVKHRKQHHPS) show a composition bias toward basic residues. The interval 1 to 25 (MLIPRRVKHRKQHHPSRSGAAKGGT) is disordered.

This sequence belongs to the universal ribosomal protein uL16 family. In terms of assembly, part of the 50S ribosomal subunit.

Functionally, binds 23S rRNA and is also seen to make contacts with the A and possibly P site tRNAs. The chain is Large ribosomal subunit protein uL16 from Rhodococcus jostii (strain RHA1).